Reading from the N-terminus, the 128-residue chain is Light-regulated protein, chloroplastic (128 aa).

2 consecutive repeat copies span residues 58-72 (VFPM…GEAC) and 111-125 (VFPE…GEFC). A 2 X 15 AA approximate repeats region spans residues 58–125 (VFPMEACDLI…ACDDLGGEFC (68 aa)).

Component of high molecular weight thylakoid LFNRs-containing protein complexes containing LIR1, LFNR1, LFNR2, TIC62 and TROL proteins. Interacts directly with LFNR1 and LFNR2; LIR1 increases the affinity of LFNR1 and LFNR2 for TIC62 and subsequent thylakoid relocalization. May form interchain disulfide bonds with LFNR1 and LFNR2.

It localises to the plastid. Its subcellular location is the chloroplast thylakoid membrane. The protein resides in the chloroplast envelope. It is found in the chloroplast stroma. Thylakoid-determinant subunit of high molecular weight LFNRs-containing protein complexes. The sequence is that of Light-regulated protein, chloroplastic (LIR1) from Oryza sativa subsp. japonica (Rice).